A 157-amino-acid polypeptide reads, in one-letter code: Endoribonuclease YbeY (157 aa).

The Zn(2+) site is built by His111, His115, and His121. The disordered stretch occupies residues 136–157 (ELLAELGHPDPYADDETDSITH). The segment covering 147-157 (YADDETDSITH) has biased composition (acidic residues).

Belongs to the endoribonuclease YbeY family. Requires Zn(2+) as cofactor.

It localises to the cytoplasm. Its function is as follows. Single strand-specific metallo-endoribonuclease involved in late-stage 70S ribosome quality control and in maturation of the 3' terminus of the 16S rRNA. This Pseudomonas putida (strain ATCC 700007 / DSM 6899 / JCM 31910 / BCRC 17059 / LMG 24140 / F1) protein is Endoribonuclease YbeY.